We begin with the raw amino-acid sequence, 394 residues long: NAD(P)H-quinone oxidoreductase subunit H (394 aa).

Belongs to the complex I 49 kDa subunit family. NDH-1 can be composed of about 15 different subunits; different subcomplexes with different compositions have been identified which probably have different functions.

It localises to the cellular thylakoid membrane. It carries out the reaction a plastoquinone + NADH + (n+1) H(+)(in) = a plastoquinol + NAD(+) + n H(+)(out). The catalysed reaction is a plastoquinone + NADPH + (n+1) H(+)(in) = a plastoquinol + NADP(+) + n H(+)(out). Its function is as follows. NDH-1 shuttles electrons from an unknown electron donor, via FMN and iron-sulfur (Fe-S) centers, to quinones in the respiratory and/or the photosynthetic chain. The immediate electron acceptor for the enzyme in this species is believed to be plastoquinone. Couples the redox reaction to proton translocation, and thus conserves the redox energy in a proton gradient. Cyanobacterial NDH-1 also plays a role in inorganic carbon-concentration. This Synechococcus sp. (strain RCC307) protein is NAD(P)H-quinone oxidoreductase subunit H.